Here is a 276-residue protein sequence, read N- to C-terminus: Cholesterol 25-hydroxylase-like protein 1, member 2 (276 aa).

The N-linked (GlcNAc...) asparagine glycan is linked to Asn30. 3 consecutive transmembrane segments (helical) span residues 39-59, 90-110, and 126-146; these read LFPV…YLSC, GVTL…QWMW, and LVGG…IWHF. Residues 134–265 enclose the Fatty acid hydroxylase domain; that stretch reads LLLFDLQYFI…FSHWDKMFGT (132 aa). A Histidine box-1 motif is present at residues 144 to 148; the sequence is WHFLH. The short motif at 159–163 is the Histidine box-2 element; that stretch reads HAIHH. An N-linked (GlcNAc...) asparagine glycan is attached at Asn164. The next 2 membrane-spanning stretches (helical) occupy residues 175-195 and 199-219; these read CLGG…PVLL and LLTT…DHCG. Positions 240–246 match the Histidine box-3 motif; that stretch reads KHDVHHQ.

It belongs to the sterol desaturase family. Fe cation is required as a cofactor.

The protein resides in the endoplasmic reticulum membrane. Functionally, may catalyze the formation of 25-hydroxycholesterol from cholesterol. The chain is Cholesterol 25-hydroxylase-like protein 1, member 2 from Danio rerio (Zebrafish).